The primary structure comprises 450 residues: MSHPIVRFAPSPTGRIHIGNARPALLNFLFARKYHGEFILRFDDTDLERSKEEYAASIEVDLAWLGITPDRTLRQSQRFALYREAAEVLRSKGRLYPCYETAEELDRKRKRQQARGLPPIYDRAALALSEADRAKLEAEGRRPHWRFKLDPGIARWDDLIRGESHIDAASLSDPILLREDGSYLYTLPSVVDDIDCKITHVIRGEDHVTNTAVQIQLFEALAGHGHVPVFGHHNLLSSASGEGFSKRTGSLSIGSLRDQGFESLAVAAAAVLTGSSVAVHPVKSLDELVAGFDLASLSRTQARFDPAELANLSARTLHQLDFETVRDRLAAHDITGYKAKAFWEAVRGNLTVFLDCIDWWRVVEGEIPPVTEDTAFLDLAKNNLPEEPWDEKAWSSWTGRLKDQTGRKGKALFHPLRLALTGRETGPELAALLPLIGRLKATARLSGHVA.

The 'HIGH' region motif lies at 10-20 (PSPTGRIHIGN). The 'KMSKS' region motif lies at 243–247 (GFSKR). K246 provides a ligand contact to ATP.

Belongs to the class-I aminoacyl-tRNA synthetase family. Glutamate--tRNA ligase type 1 subfamily. In terms of assembly, monomer.

It is found in the cytoplasm. It catalyses the reaction tRNA(Glu) + L-glutamate + ATP = L-glutamyl-tRNA(Glu) + AMP + diphosphate. In terms of biological role, catalyzes the attachment of glutamate to tRNA(Glu) in a two-step reaction: glutamate is first activated by ATP to form Glu-AMP and then transferred to the acceptor end of tRNA(Glu). This Beijerinckia indica subsp. indica (strain ATCC 9039 / DSM 1715 / NCIMB 8712) protein is Glutamate--tRNA ligase 2.